We begin with the raw amino-acid sequence, 299 residues long: Porphobilinogen deaminase (299 aa).

Cys242 bears the S-(dipyrrolylmethanemethyl)cysteine mark.

The protein belongs to the HMBS family. Monomer. Requires dipyrromethane as cofactor.

It catalyses the reaction 4 porphobilinogen + H2O = hydroxymethylbilane + 4 NH4(+). The protein operates within porphyrin-containing compound metabolism; protoporphyrin-IX biosynthesis; coproporphyrinogen-III from 5-aminolevulinate: step 2/4. Tetrapolymerization of the monopyrrole PBG into the hydroxymethylbilane pre-uroporphyrinogen in several discrete steps. The sequence is that of Porphobilinogen deaminase (hemC) from Rickettsia prowazekii (strain Madrid E).